Here is a 145-residue protein sequence, read N- to C-terminus: Protein SprT-like (145 aa).

Residues 4-140 (TNYVQEVSLA…VCGNCHGKLI (137 aa)) enclose the SprT-like domain. Zn(2+) is bound at residue H64. E65 is a catalytic residue. H68 contributes to the Zn(2+) binding site.

The protein belongs to the SprT family. The cofactor is Zn(2+).

It is found in the cytoplasm. In Streptococcus pyogenes serotype M6 (strain ATCC BAA-946 / MGAS10394), this protein is Protein SprT-like.